The following is a 165-amino-acid chain: Peptide methionine sulfoxide reductase MsrA (165 aa).

Cys-10 is an active-site residue.

The protein belongs to the MsrA Met sulfoxide reductase family.

The enzyme catalyses L-methionyl-[protein] + [thioredoxin]-disulfide + H2O = L-methionyl-(S)-S-oxide-[protein] + [thioredoxin]-dithiol. The catalysed reaction is [thioredoxin]-disulfide + L-methionine + H2O = L-methionine (S)-S-oxide + [thioredoxin]-dithiol. Functionally, has an important function as a repair enzyme for proteins that have been inactivated by oxidation. Catalyzes the reversible oxidation-reduction of methionine sulfoxide in proteins to methionine. In Campylobacter jejuni (strain RM1221), this protein is Peptide methionine sulfoxide reductase MsrA.